A 598-amino-acid polypeptide reads, in one-letter code: Ecto-NOX disulfide-thiol exchanger 2 (598 aa).

Positions 99–178 (KTVFVGGLPE…GRLHVDFAQA (80 aa)) constitute an RRM domain. 2 coiled-coil regions span residues 264–299 (IQSA…LSGI) and 352–476 (RREE…KQEN).

It belongs to the ENOX family. The cofactor is Cu cation. Glycosylated.

It localises to the cell membrane. Its subcellular location is the secreted. The protein resides in the extracellular space. With respect to regulation, inhibited by the antitumor sulfonylurea LY181984, the vabilloid capsaicin, and retinoids. In terms of biological role, may be involved in cell growth. Probably acts as a terminal oxidase of plasma electron transport from cytosolic NAD(P)H via hydroquinones to acceptors at the cell surface. Hydroquinone oxidase activity alternates with a protein disulfide-thiol interchange/oxidoreductase activity which may control physical membrane displacements associated with vesicle budding or cell enlargement. The activities oscillate with a period length of 22 minutes and play a role in control of the ultradian cellular biological clock. This Mus musculus (Mouse) protein is Ecto-NOX disulfide-thiol exchanger 2 (Enox2).